The following is a 177-amino-acid chain: Nucleoside triphosphate/diphosphate phosphatase (177 aa).

Residue arginine 23 is the Proton donor of the active site. Asparagine 87, aspartate 103, aspartate 105, aspartate 107, aspartate 120, and glutamate 123 together coordinate Mg(2+).

Belongs to the Ntdp family. It depends on Mg(2+) as a cofactor.

The enzyme catalyses a ribonucleoside 5'-triphosphate + H2O = a ribonucleoside 5'-diphosphate + phosphate + H(+). It carries out the reaction a ribonucleoside 5'-diphosphate + H2O = a ribonucleoside 5'-phosphate + phosphate + H(+). Functionally, has nucleoside phosphatase activity towards nucleoside triphosphates and nucleoside diphosphates. The sequence is that of Nucleoside triphosphate/diphosphate phosphatase from Streptococcus pyogenes serotype M1.